The chain runs to 212 residues: 2-C-methyl-D-erythritol 4-phosphate cytidylyltransferase (212 aa).

Belongs to the IspD/TarI cytidylyltransferase family. IspD subfamily.

It carries out the reaction 2-C-methyl-D-erythritol 4-phosphate + CTP + H(+) = 4-CDP-2-C-methyl-D-erythritol + diphosphate. It participates in isoprenoid biosynthesis; isopentenyl diphosphate biosynthesis via DXP pathway; isopentenyl diphosphate from 1-deoxy-D-xylulose 5-phosphate: step 2/6. Functionally, catalyzes the formation of 4-diphosphocytidyl-2-C-methyl-D-erythritol from CTP and 2-C-methyl-D-erythritol 4-phosphate (MEP). This is 2-C-methyl-D-erythritol 4-phosphate cytidylyltransferase from Chlamydia caviae (strain ATCC VR-813 / DSM 19441 / 03DC25 / GPIC) (Chlamydophila caviae).